The sequence spans 62 residues: Synergistic-type venom protein S2C4 (62 aa).

3 disulfide bridges follow: C3/C24, C17/C42, and C46/C57.

This sequence belongs to the three-finger toxin family. Short-chain subfamily. Aminergic toxin sub-subfamily. As to quaternary structure, homodimer; disulfide-linked. Expressed by the venom gland.

The protein localises to the secreted. Its function is as follows. This protein shows a synergetic toxic effect in that it enhances the toxicity of other toxins. This chain is Synergistic-type venom protein S2C4, found in Dendroaspis jamesoni kaimosae (Eastern Jameson's mamba).